Here is a 267-residue protein sequence, read N- to C-terminus: Alpha-tubulin N-acetyltransferase (267 aa).

An N-acetyltransferase domain is found at 1–197; sequence MDFRAGLENV…NNFVVYSEFF (197 aa). Acetyl-CoA is bound by residues 131–144 and 167–176; these read FYIHESHQRKGYGK and SMKMIQFLHK.

Belongs to the acetyltransferase ATAT1 family.

The enzyme catalyses L-lysyl-[alpha-tubulin] + acetyl-CoA = N(6)-acetyl-L-lysyl-[alpha-tubulin] + CoA + H(+). Its function is as follows. Specifically acetylates 'Lys-40' in alpha-tubulin on the lumenal side of microtubules. Promotes microtubule destabilization and accelerates microtubule dynamics; this activity may be independent of acetylation activity. Acetylates alpha-tubulin with a slow enzymatic rate, due to a catalytic site that is not optimized for acetyl transfer. Enters the microtubule through each end and diffuses quickly throughout the lumen of microtubules. Acetylates only long/old microtubules because of its slow acetylation rate since it does not have time to act on dynamically unstable microtubules before the enzyme is released. This Schistosoma japonicum (Blood fluke) protein is Alpha-tubulin N-acetyltransferase.